Here is a 351-residue protein sequence, read N- to C-terminus: Phospho-N-acetylmuramoyl-pentapeptide-transferase (351 aa).

The next 10 helical transmembrane spans lie at 17–37 (TAYATIFAFLLALIFGPFIIS), 61–83 (MGIPTMGGVLIFFCVLVSLFFWI), 88–105 (IYFLIVLFVMVSFACLGF), 130–150 (ILFSFISVVMLYYFGGEHVSI), 158–178 (SLKLDLGILYIPFGMFVLISA), 190–210 (GLAIGLSIVVIGALIIIAYLT), 230–250 (LVIFLGALLGGSFGFLWFNAY), 254–274 (IMMGDTGSLSIGAVLGMVALI), 279–299 (ILFAILAGVFVVETLSVIIQV), and 328–348 (QVVIRFWIIGLIFAILALSTI).

The protein belongs to the glycosyltransferase 4 family. MraY subfamily. It depends on Mg(2+) as a cofactor.

The protein localises to the cell inner membrane. The catalysed reaction is UDP-N-acetyl-alpha-D-muramoyl-L-alanyl-gamma-D-glutamyl-meso-2,6-diaminopimeloyl-D-alanyl-D-alanine + di-trans,octa-cis-undecaprenyl phosphate = di-trans,octa-cis-undecaprenyl diphospho-N-acetyl-alpha-D-muramoyl-L-alanyl-D-glutamyl-meso-2,6-diaminopimeloyl-D-alanyl-D-alanine + UMP. Its pathway is cell wall biogenesis; peptidoglycan biosynthesis. In terms of biological role, catalyzes the initial step of the lipid cycle reactions in the biosynthesis of the cell wall peptidoglycan: transfers peptidoglycan precursor phospho-MurNAc-pentapeptide from UDP-MurNAc-pentapeptide onto the lipid carrier undecaprenyl phosphate, yielding undecaprenyl-pyrophosphoryl-MurNAc-pentapeptide, known as lipid I. This Borrelia recurrentis (strain A1) protein is Phospho-N-acetylmuramoyl-pentapeptide-transferase.